Here is a 244-residue protein sequence, read N- to C-terminus: 14-3-3 protein beta/alpha (244 aa).

Met-1 carries the N-acetylmethionine modification.

Belongs to the 14-3-3 family. Homodimer, and heterodimer with other family members.

It is found in the cytoplasm. Its function is as follows. Adapter protein implicated in the regulation of a large spectrum of both general and specialized signaling pathways. Binds to a large number of partners, usually by recognition of a phosphoserine or phosphothreonine motif. Binding generally results in the modulation of the activity of the binding partner. This chain is 14-3-3 protein beta/alpha (ywhab), found in Xenopus tropicalis (Western clawed frog).